We begin with the raw amino-acid sequence, 78 residues long: Acyl carrier protein (78 aa).

The Carrier domain occupies 2-77 (SEIASRVKAI…DAVAYIEEHA (76 aa)). Ser-37 is subject to O-(pantetheine 4'-phosphoryl)serine.

This sequence belongs to the acyl carrier protein (ACP) family. Post-translationally, 4'-phosphopantetheine is transferred from CoA to a specific serine of apo-ACP by AcpS. This modification is essential for activity because fatty acids are bound in thioester linkage to the sulfhydryl of the prosthetic group.

The protein resides in the cytoplasm. It participates in lipid metabolism; fatty acid biosynthesis. Carrier of the growing fatty acid chain in fatty acid biosynthesis. This chain is Acyl carrier protein, found in Bacteroides fragilis (strain ATCC 25285 / DSM 2151 / CCUG 4856 / JCM 11019 / LMG 10263 / NCTC 9343 / Onslow / VPI 2553 / EN-2).